Reading from the N-terminus, the 649-residue chain is 1-deoxy-D-xylulose-5-phosphate synthase (649 aa).

Residues His-74 and 115-117 contribute to the thiamine diphosphate site; that span reads GHA. Asp-146 contacts Mg(2+). Residues 147–148, Asn-176, Tyr-292, and Glu-375 contribute to the thiamine diphosphate site; that span reads GA. Asn-176 lines the Mg(2+) pocket.

Belongs to the transketolase family. DXPS subfamily. Homodimer. It depends on Mg(2+) as a cofactor. Thiamine diphosphate is required as a cofactor.

The catalysed reaction is D-glyceraldehyde 3-phosphate + pyruvate + H(+) = 1-deoxy-D-xylulose 5-phosphate + CO2. The protein operates within metabolic intermediate biosynthesis; 1-deoxy-D-xylulose 5-phosphate biosynthesis; 1-deoxy-D-xylulose 5-phosphate from D-glyceraldehyde 3-phosphate and pyruvate: step 1/1. Its function is as follows. Catalyzes the acyloin condensation reaction between C atoms 2 and 3 of pyruvate and glyceraldehyde 3-phosphate to yield 1-deoxy-D-xylulose-5-phosphate (DXP). This Synechococcus sp. (strain JA-3-3Ab) (Cyanobacteria bacterium Yellowstone A-Prime) protein is 1-deoxy-D-xylulose-5-phosphate synthase.